Reading from the N-terminus, the 478-residue chain is Probable cytosolic Fe-S cluster assembly factor AAEL012261 (478 aa).

[4Fe-4S] cluster is bound by residues C23, C69, C72, C75, C189, C245, C396, and C400.

This sequence belongs to the NARF family.

Its function is as follows. Component of the cytosolic iron-sulfur (Fe/S) protein assembly machinery. Required for maturation of extramitochondrial Fe/S proteins. The polypeptide is Probable cytosolic Fe-S cluster assembly factor AAEL012261 (Aedes aegypti (Yellowfever mosquito)).